A 184-amino-acid polypeptide reads, in one-letter code: ADP-ribosylation factor-like protein 8c (184 aa).

Positions 1–18 form an intramembrane region, note=Mediates targeting to membranes; it reads MGLWDSLLNWLRSLFFKQ. Residues 29–34, 48–51, 70–74, and 129–132 each bind GTP; these read NAGKTS, MIPT, DLGGQ, and NKID.

Belongs to the small GTPase superfamily. Arf family. As to quaternary structure, interacts with tubulin.

Its subcellular location is the late endosome membrane. The protein resides in the lysosome membrane. It is found in the cytoplasm. The protein localises to the cytoskeleton. It localises to the spindle. Its function is as follows. May play a role in lysosome motility. May play a role in chromosome segregation. (Microbial infection) Component of tomato mosaic virus (ToMV) RNA replication complexes. Required for tobamovirus multiplication, especially for efficient negative-strand RNA synthesis and viral RNA capping. In Arabidopsis thaliana (Mouse-ear cress), this protein is ADP-ribosylation factor-like protein 8c.